The following is a 218-amino-acid chain: 2-C-methyl-D-erythritol 4-phosphate cytidylyltransferase (218 aa).

It belongs to the IspD/TarI cytidylyltransferase family. IspD subfamily.

It carries out the reaction 2-C-methyl-D-erythritol 4-phosphate + CTP + H(+) = 4-CDP-2-C-methyl-D-erythritol + diphosphate. Its pathway is isoprenoid biosynthesis; isopentenyl diphosphate biosynthesis via DXP pathway; isopentenyl diphosphate from 1-deoxy-D-xylulose 5-phosphate: step 2/6. Catalyzes the formation of 4-diphosphocytidyl-2-C-methyl-D-erythritol from CTP and 2-C-methyl-D-erythritol 4-phosphate (MEP). This Chlamydia muridarum (strain MoPn / Nigg) protein is 2-C-methyl-D-erythritol 4-phosphate cytidylyltransferase.